We begin with the raw amino-acid sequence, 189 residues long: Orotate phosphoribosyltransferase (189 aa).

Residues arginine 99, lysine 100, lysine 103, histidine 105, and glutamate 126 to serine 134 each bind 5-phospho-alpha-D-ribose 1-diphosphate. Threonine 130 and arginine 158 together coordinate orotate.

This sequence belongs to the purine/pyrimidine phosphoribosyltransferase family. PyrE subfamily. In terms of assembly, homodimer. Requires Mg(2+) as cofactor.

The enzyme catalyses orotidine 5'-phosphate + diphosphate = orotate + 5-phospho-alpha-D-ribose 1-diphosphate. It participates in pyrimidine metabolism; UMP biosynthesis via de novo pathway; UMP from orotate: step 1/2. Its function is as follows. Catalyzes the transfer of a ribosyl phosphate group from 5-phosphoribose 1-diphosphate to orotate, leading to the formation of orotidine monophosphate (OMP). The polypeptide is Orotate phosphoribosyltransferase (Thermosynechococcus vestitus (strain NIES-2133 / IAM M-273 / BP-1)).